Here is a 184-residue protein sequence, read N- to C-terminus: Peptide deformylase 2 (184 aa).

Fe cation contacts are provided by Cys110 and His153. Glu154 is a catalytic residue. Fe cation is bound at residue His157.

The protein belongs to the polypeptide deformylase family. It depends on Fe(2+) as a cofactor.

It catalyses the reaction N-terminal N-formyl-L-methionyl-[peptide] + H2O = N-terminal L-methionyl-[peptide] + formate. Functionally, removes the formyl group from the N-terminal Met of newly synthesized proteins. Requires at least a dipeptide for an efficient rate of reaction. N-terminal L-methionine is a prerequisite for activity but the enzyme has broad specificity at other positions. The polypeptide is Peptide deformylase 2 (Bacillus anthracis).